We begin with the raw amino-acid sequence, 1547 residues long: Tubby-related protein 4 (1547 aa).

3 WD repeats span residues Gly80–Glu119, Asp123–Ser162, and Asn165–Val204. The SOCS box domain maps to Ala364–Pro414. Positions Ser530 to Leu580 are disordered. The segment covering Ile533–Ser546 has biased composition (low complexity). Ser577 bears the Phosphoserine mark. Arg949 and Arg954 each carry asymmetric dimethylarginine. Phosphoserine is present on residues Ser1347 and Ser1378. A disordered region spans residues Ser1374 to Pro1414. The segment at Ser1436–Lys1547 is TUB.

The protein belongs to the TUB family.

Its subcellular location is the cytoplasm. It participates in protein modification; protein ubiquitination. Its function is as follows. May be a substrate-recognition component of a SCF-like ECS (Elongin-Cullin-SOCS-box protein) E3 ubiquitin ligase complex which mediates the ubiquitination and subsequent proteasomal degradation of target proteins. This Mus musculus (Mouse) protein is Tubby-related protein 4 (Tulp4).